The following is a 201-amino-acid chain: Potassium-transporting ATPase KdpC subunit (201 aa).

Residues 7–29 form a helical membrane-spanning segment; the sequence is PALVLLTALTAITGLAYPLAMTG.

This sequence belongs to the KdpC family. In terms of assembly, the system is composed of three essential subunits: KdpA, KdpB and KdpC.

It is found in the cell inner membrane. Functionally, part of the high-affinity ATP-driven potassium transport (or Kdp) system, which catalyzes the hydrolysis of ATP coupled with the electrogenic transport of potassium into the cytoplasm. This subunit acts as a catalytic chaperone that increases the ATP-binding affinity of the ATP-hydrolyzing subunit KdpB by the formation of a transient KdpB/KdpC/ATP ternary complex. This chain is Potassium-transporting ATPase KdpC subunit, found in Methylorubrum populi (strain ATCC BAA-705 / NCIMB 13946 / BJ001) (Methylobacterium populi).